A 262-amino-acid chain; its full sequence is Leucine-rich repeat-containing protein 18 (262 aa).

LRR repeat units follow at residues 28-49, 51-72, 74-95, 97-118, 122-144, 145-167, and 168-189; these read GRKR…ILRL, DIDE…IAKF, NLRW…IGQM, SLLF…VELN, NIRT…GALK, ELHE…AKLP, and KLKK…EMFV.

Exclusively expressed in spermatocytes and roud spermatids within seminiferous tubules during spermatogenesis.

The protein localises to the cytoplasm. May be involved in the regulation of spermatogenesis and sperm maturation. This Mus musculus (Mouse) protein is Leucine-rich repeat-containing protein 18 (Lrrc18).